We begin with the raw amino-acid sequence, 307 residues long: Lipoyl synthase (307 aa).

7 residues coordinate [4Fe-4S] cluster: Cys-55, Cys-60, Cys-66, Cys-81, Cys-85, Cys-88, and Ser-292. The Radical SAM core domain occupies 67 to 281; sequence WEDREATFLI…ARHAEELGFS (215 aa).

This sequence belongs to the radical SAM superfamily. Lipoyl synthase family. It depends on [4Fe-4S] cluster as a cofactor.

The protein localises to the cytoplasm. It carries out the reaction [[Fe-S] cluster scaffold protein carrying a second [4Fe-4S](2+) cluster] + N(6)-octanoyl-L-lysyl-[protein] + 2 oxidized [2Fe-2S]-[ferredoxin] + 2 S-adenosyl-L-methionine + 4 H(+) = [[Fe-S] cluster scaffold protein] + N(6)-[(R)-dihydrolipoyl]-L-lysyl-[protein] + 4 Fe(3+) + 2 hydrogen sulfide + 2 5'-deoxyadenosine + 2 L-methionine + 2 reduced [2Fe-2S]-[ferredoxin]. Its pathway is protein modification; protein lipoylation via endogenous pathway; protein N(6)-(lipoyl)lysine from octanoyl-[acyl-carrier-protein]: step 2/2. In terms of biological role, catalyzes the radical-mediated insertion of two sulfur atoms into the C-6 and C-8 positions of the octanoyl moiety bound to the lipoyl domains of lipoate-dependent enzymes, thereby converting the octanoylated domains into lipoylated derivatives. This Mycobacterium avium (strain 104) protein is Lipoyl synthase.